The following is a 1032-amino-acid chain: Histone lysine demethylase PHF8 (1032 aa).

A PHD-type zinc finger spans residues 5–56 (PVYCLCRLPYDVTRFMIECDVCQDWFHGSCVGVEEDKAAEIDLYHCPNCQVT). The linker stretch occupies residues 65–83 (RRGAVKHADVGLGRDSGRP). A JmjC domain is found at 199 to 355 (FSDTRLSNLV…MQLRAYEIEK (157 aa)). Thr-248 contributes to the substrate binding site. His-251 and Asp-253 together coordinate Fe cation. A substrate-binding site is contributed by Lys-268. Residue His-323 coordinates Fe cation. Disordered regions lie at residues 455-515 (SGTP…KGKE), 577-660 (QGKK…VDFD), 697-857 (LDSA…REGA), 875-923 (QQEQ…EPPV), and 943-1015 (EYTA…ATAK). A compositionally biased stretch (polar residues) spans 473 to 483 (QLNTPLTFSQH). The segment covering 583–592 (AGSANGAGSS) has biased composition (low complexity). The span at 620–632 (PRRRPSLPSKKKL) shows a compositional bias: basic residues. Residues 644–655 (PCSDPHRIREPG) are compositionally biased toward basic and acidic residues. Low complexity-rich tracts occupy residues 699 to 710 (SALSEEAPASPS) and 724 to 739 (PPSS…PLSI). Residues 774–784 (PGKRPIKRPAR) are compositionally biased toward basic residues. A compositionally biased stretch (basic and acidic residues) spans 848–857 (KQERPVREGA). The span at 882-891 (ITKRKYTKKK) shows a compositional bias: basic residues. Residues 970–990 (SRRPSLSPQNSSSYSPSAPSP) show a composition bias toward low complexity.

It belongs to the JHDM1 histone demethylase family. JHDM1D subfamily. It depends on Fe(2+) as a cofactor.

Its subcellular location is the nucleus. It is found in the nucleolus. It carries out the reaction N(6),N(6)-dimethyl-L-lysyl(36)-[histone H3] + 2 2-oxoglutarate + 2 O2 = L-lysyl(36)-[histone H3] + 2 formaldehyde + 2 succinate + 2 CO2. The catalysed reaction is N(6),N(6)-dimethyl-L-lysyl(9)-[histone H3] + 2 2-oxoglutarate + 2 O2 = L-lysyl(9)-[histone H3] + 2 formaldehyde + 2 succinate + 2 CO2. Functionally, histone lysine demethylase with selectivity for the di- and monomethyl states that plays a key role cell cycle progression, rDNA transcription and brain development. Demethylates mono- and dimethylated histone H3 'Lys-9' residue (H3K9Me1 and H3K9Me2), dimethylated H3 'Lys-27' (H3K27Me2) and monomethylated histone H4 'Lys-20' residue (H4K20Me1). Acts as a transcription activator as H3K9Me1, H3K9Me2, H3K27Me2 and H4K20Me1 are epigenetic repressive marks. Involved in cell cycle progression by being required to control G1-S transition. Acts as a coactivator of rDNA transcription, by activating polymerase I (pol I) mediated transcription of rRNA genes. Has activity toward H4K20Me1 only when nucleosome is used as a substrate and when not histone octamer is used as substrate. Required for brain development, probably by regulating expression of neuron-specific genes. The protein is Histone lysine demethylase PHF8 (phf8) of Danio rerio (Zebrafish).